Here is a 331-residue protein sequence, read N- to C-terminus: Biotin synthase (331 aa).

Positions 53 to 271 (TELQLSQLLS…IAVARIVCPK (219 aa)) constitute a Radical SAM core domain. Positions 68, 72, and 75 each coordinate [4Fe-4S] cluster. [2Fe-2S] cluster contacts are provided by cysteine 112, cysteine 143, cysteine 203, and arginine 275.

It belongs to the radical SAM superfamily. Biotin synthase family. In terms of assembly, homodimer. [4Fe-4S] cluster is required as a cofactor. [2Fe-2S] cluster serves as cofactor.

It carries out the reaction (4R,5S)-dethiobiotin + (sulfur carrier)-SH + 2 reduced [2Fe-2S]-[ferredoxin] + 2 S-adenosyl-L-methionine = (sulfur carrier)-H + biotin + 2 5'-deoxyadenosine + 2 L-methionine + 2 oxidized [2Fe-2S]-[ferredoxin]. It participates in cofactor biosynthesis; biotin biosynthesis; biotin from 7,8-diaminononanoate: step 2/2. Its function is as follows. Catalyzes the conversion of dethiobiotin (DTB) to biotin by the insertion of a sulfur atom into dethiobiotin via a radical-based mechanism. This is Biotin synthase from Phenylobacterium zucineum (strain HLK1).